The primary structure comprises 334 residues: D-alanine--D-alanine ligase (334 aa).

An ATP-grasp domain is found at 110–306 (KHVLKSLGID…FDHVVDLIVQ (197 aa)). 138 to 190 (LPYPFVIKPVRGGSTIGVHAIFSKSEYLDLSAHADTLEDRMIVEEYVSGQEVQ) serves as a coordination point for ATP. Asp258, Glu272, and Asn274 together coordinate Mg(2+).

The protein belongs to the D-alanine--D-alanine ligase family. Mg(2+) serves as cofactor. The cofactor is Mn(2+).

The protein localises to the cytoplasm. It carries out the reaction 2 D-alanine + ATP = D-alanyl-D-alanine + ADP + phosphate + H(+). The protein operates within cell wall biogenesis; peptidoglycan biosynthesis. Its function is as follows. Cell wall formation. This chain is D-alanine--D-alanine ligase, found in Anaplasma marginale (strain Florida).